Here is a 226-residue protein sequence, read N- to C-terminus: Membrane protein (226 aa).

The Virion surface segment spans residues 1 to 11 (MSNGSIPVDEV). Residues 12 to 32 (IEHLRNWNFTWNIILTILLVV) traverse the membrane as a helical segment. At 33–41 (LQYGHYKYS) the chain is on the intravirion side. A helical transmembrane segment spans residues 42-62 (VFLYGVKMAILWILWPLVLAL). Over 63–75 (SLFDAWASFQVNW) the chain is Virion surface. A helical transmembrane segment spans residues 76–96 (VFFAFSILMACITLMLWIMYF). Topologically, residues 97 to 226 (VNSIRLWRRT…TDSEKVLHLV (130 aa)) are intravirion. The interaction with N protein stretch occupies residues 200 to 216 (RSKHGDYSAVSNPSAVL).

It belongs to the alphacoronaviruses M protein family. Homomultimer. Interacts with envelope E protein in the budding compartment of the host cell, which is located between endoplasmic reticulum and the Golgi complex. Forms a complex with HE and S proteins. Interacts with nucleocapsid N protein. This interaction probably participates in RNA packaging into the virus.

It is found in the virion membrane. The protein localises to the host Golgi apparatus membrane. Functionally, component of the viral envelope that plays a central role in virus morphogenesis and assembly via its interactions with other viral proteins. In Sus scrofa (Pig), this protein is Membrane protein.